Consider the following 95-residue polypeptide: Large ribosomal subunit protein bL25 (95 aa).

This sequence belongs to the bacterial ribosomal protein bL25 family. As to quaternary structure, part of the 50S ribosomal subunit; part of the 5S rRNA/L5/L18/L25 subcomplex. Contacts the 5S rRNA. Binds to the 5S rRNA independently of L5 and L18.

Functionally, this is one of the proteins that binds to the 5S RNA in the ribosome where it forms part of the central protuberance. The sequence is that of Large ribosomal subunit protein bL25 from Actinobacillus pleuropneumoniae serotype 5b (strain L20).